The following is an 882-amino-acid chain: Formin-like protein 9 (882 aa).

A signal peptide spans 1–19 (MGMAMRCVLVLFSVSPVLL). The tract at residues 67–92 (SRGRRHKRYSEAPAPAPAPVPAHQAR) is disordered. A helical transmembrane segment spans residues 138 to 158 (IVALGVVGLCLVVLGVVIAAF). Disordered regions lie at residues 178-202 (RHGSRDQRSPAATRKVSSHPSPDPL), 293-316 (THDSPSDSSYQSLSPDCTSRLSPK), and 401-471 (TMTN…PLPR). Residues 298-308 (SDSSYQSLSPD) show a composition bias toward low complexity. A compositionally biased stretch (pro residues) spans 427–441 (KPAPPPPPQKNPPPN). Residues 462–882 (VGKDGSPLPR…QTLNLVLPLK (421 aa)) enclose the FH2 domain.

It belongs to the formin-like family. Class-I subfamily.

The protein localises to the membrane. This chain is Formin-like protein 9 (FH9), found in Oryza sativa subsp. japonica (Rice).